The following is a 208-amino-acid chain: Large ribosomal subunit protein uL3 (208 aa).

At Gln149 the chain carries N5-methylglutamine.

This sequence belongs to the universal ribosomal protein uL3 family. In terms of assembly, part of the 50S ribosomal subunit. Forms a cluster with proteins L14 and L19. Post-translationally, methylated by PrmB.

In terms of biological role, one of the primary rRNA binding proteins, it binds directly near the 3'-end of the 23S rRNA, where it nucleates assembly of the 50S subunit. This is Large ribosomal subunit protein uL3 from Haemophilus ducreyi (strain 35000HP / ATCC 700724).